A 152-amino-acid chain; its full sequence is Antiholin-like protein LrgA (152 aa).

4 helical membrane passes run 23–43 (YSIFQQALTIAVILLISKIIE), 45–65 (FMPIPMPASVIGLVLLFIALC), 77–97 (VGTALTNNIGFLFVPAGISVI), and 108–128 (ILIILLIIISTLLLLICTGFA).

This sequence belongs to the CidA/LrgA family. LrgA subfamily.

The protein resides in the cell membrane. Inhibits the expression or activity of extracellular murein hydrolases by interacting, possibly with LrgB, with the holin-like proteins CidA and/or CidB. The LrgAB and CidAB proteins may affect the proton motive force of the membrane. May be involved in programmed cell death (PCD), possibly triggering PCD in response to antibiotics and environmental stresses. The sequence is that of Antiholin-like protein LrgA from Staphylococcus epidermidis (strain ATCC 35984 / DSM 28319 / BCRC 17069 / CCUG 31568 / BM 3577 / RP62A).